The sequence spans 195 residues: UPF0215 protein TSIB_1161 (195 aa).

It belongs to the UPF0215 family.

The chain is UPF0215 protein TSIB_1161 from Thermococcus sibiricus (strain DSM 12597 / MM 739).